A 20-amino-acid polypeptide reads, in one-letter code: Hemocyanin subunit Ib (20 aa).

Positions 1–20 (DSVGSTTAHKQQNINHLLDK) are disordered.

This sequence belongs to the tyrosinase family. Hemocyanin subfamily. As to quaternary structure, composed of 3 major subunits (IB, II and III) and 1 minor subunit (IA) which form homohexamers and heterohexamers. May also form larger structures. Hemolymph.

It is found in the secreted. Its subcellular location is the extracellular space. Hemocyanins are copper-containing oxygen carriers occurring freely dissolved in the hemolymph of many mollusks and arthropods. In Panulirus japonicus (Japanese spiny lobster), this protein is Hemocyanin subunit Ib.